A 715-amino-acid chain; its full sequence is MAANMYRVGDYVYFENSSSNPYLIRRIEELNKTANGNVEAKVVCFYRRRDISSSLIALADKHATLSVCYRAGPGADTGEEGEVEEEVENPEMVDLPEKLKHQLRHRELFLSRQLESLPATHIRGKCSVTLLNETESLKSYLEREDFFFYSLVYDPQQKTLLADKGEIRVGNRYQADITDLLKEGEEDGRDQSKLETKVWEAHNPLVDKQIDQFLVVARSVGTFARALDCSSSVRQPSLHMSAAAASRDITLFHAMDTLHKNIYDISKAISALVPQGGPVLCRDEMEEWSASEANLFEEALEKYGKDFTDIQQDFLPWKSLTSIIEYYYMWKTTDRYVQQKRLKAAEAESKLKQVYIPNYNKPNPNQISASSVKATVVNGTGTPGQSPGAGRACESCYTTQSYQWYSWGPPNMQCRLCASCWTYWKKYGGLKMPTRLDGERPGPNRNNMSPHGIPARSSGSPKFAMKTRQAFYLHTTKLTRIARRLCREILRPWHAARHPYMPINSAAIKAECTARLPEASQSPLVLKQVVRKPLEAVLRYLETHPRPPKPDPVKSSSSVLSSLTPAKSAPVINNGSPTILGKRSYEQHNGVDGNMKKRLLMPSRGLANHGQTRHMGPSRNLLLNGKSYPTKVRLIRGGSLPPVKRRRMNWIDAPDDVFYMATEETRKIRKLLSSSETKRAARRPYKPIALRQSQALPLRPPPPAPVNDEPIVIED.

The 164-residue stretch at 1 to 164 (MAANMYRVGD…PQQKTLLADK (164 aa)) folds into the BAH domain. The 112-residue stretch at 165-276 (GEIRVGNRYQ…KAISALVPQG (112 aa)) folds into the ELM2 domain. Lys-182 is covalently cross-linked (Glycyl lysine isopeptide (Lys-Gly) (interchain with G-Cter in ubiquitin)). One can recognise an SANT domain in the interval 283–335 (DEMEEWSASEANLFEEALEKYGKDFTDIQQDFLPWKSLTSIIEYYYMWKTTDR). Residue Ser-386 is modified to Phosphoserine. Residues 393–420 (CESCYTTQSYQWYSWGPPNMQCRLCASC) form a GATA-type; atypical zinc finger. The tract at residues 437-460 (DGERPGPNRNNMSPHGIPARSSGS) is disordered. Phosphoserine is present on Ser-449. Residue Lys-509 forms a Glycyl lysine isopeptide (Lys-Gly) (interchain with G-Cter in SUMO2 and SUMO3) linkage. Ser-522 carries the phosphoserine modification. Residues 542–552 (ETHPRPPKPDP) show a composition bias toward basic and acidic residues. The tract at residues 542-590 (ETHPRPPKPDPVKSSSSVLSSLTPAKSAPVINNGSPTILGKRSYEQHNG) is disordered. The SH3-binding motif lies at 545–552 (PRPPKPDP). Lys-549 participates in a covalent cross-link: Glycyl lysine isopeptide (Lys-Gly) (interchain with G-Cter in SUMO2). The segment covering 553 to 565 (VKSSSSVLSSLTP) has biased composition (low complexity). Thr-564 is subject to Phosphothreonine. The residue at position 576 (Ser-576) is a Phosphoserine. Thr-578 carries the post-translational modification Phosphothreonine. Residue Lys-626 is modified to N6-acetyllysine; alternate. Residue Lys-626 forms a Glycyl lysine isopeptide (Lys-Gly) (interchain with G-Cter in ubiquitin); alternate linkage. Position 639 is a phosphoserine (Ser-639). Positions 656 to 686 (DVFYMATEETRKIRKLLSSSETKRAARRPYK) are interaction with RBBP4. Residues 673–715 (SSSETKRAARRPYKPIALRQSQALPLRPPPPAPVNDEPIVIED) form a disordered region. The short motif at 696–705 (LPLRPPPPAP) is the SH3-binding element. The short motif at 711 to 715 (IVIED) is the SUMO interaction motif 1 (SIM); crucial for efficient sumoylation element.

It belongs to the metastasis-associated protein family. Component of the nucleosome remodeling and deacetylase (NuRD) repressor complex, composed of core proteins MTA1, MTA2, MTA3, RBBP4, RBBP7, HDAC1, HDAC2, MBD2, MBD3, and peripherally associated proteins CDK2AP1, CDK2AP2, GATAD2A, GATAD2B, CHD3, CHD4 and CHD5. The exact stoichiometry of the NuRD complex is unknown, and some subunits such as MBD2 and MBD3, GATAD2A and GATAD2B, and CHD3, CHD4 and CHD5 define mutually exclusive NuRD complexes. Interacts with RBBP4; the interaction is direct. Interacts with BMAL1. Interacts with CLOCK. Interacts with COP1. Interacts with CSNK1G2 in the cytoplasm. Interacts with EP300. Interacts with HDAC2. Interacts with ITGB3BP/CENPR. Interacts with MBD3L2. Interacts with MDM2. Interacts with NACC2. Interacts with p53/TP53. Interacts with PIAS1. Interacts with PIAS3. Interacts with PIAS4. Interacts with PWWP2A. Interacts with PWWP2B. Interacts with SENP1. Interacts with SENP2. Interacts with SIX3; facilitates the binding of SIX3 to the core DNA motif of SIX3 promoter. Interacts with SUMO1. Interacts with SUMO2. Interacts with TFCP2L1; which is indispensable for TFCP2L1-mediated self-renewal-promoting effect and endoderm-inhibiting action. Interacts with TFAP2C. Interacts with TPR. Interacts with UBE2I/UBC9. Phosphorylation by CSNK1G2/CK1 triggered by estrogen enhances corepression of estrogen receptor (ER). In terms of processing, acetylation is essential for its transcriptional coactivator activity. Post-translationally, sumoylation positively regulates its transcriptional corepressor activity but does not affect the protein stability. Sumoylated preferentially by SUMO2 or SUMO3 than SUMO1. Sumoylation is enhanced by PIAS1/3/4 and preferentially sumoylated by SUMO2 in the presence of PIAS1/3/4. Desumoylated by SENP1. Ubiquitinated by COP1, which leads to proteasomal degradation. As to expression, widely expressed but not in skeletal muscle. Highly expressed in the brain, liver, kidney and cardiac muscle and in mammary tumors.

It is found in the nucleus. The protein resides in the nucleus envelope. Its subcellular location is the cytoplasm. It localises to the cytoskeleton. Functionally, transcriptional coregulator which can act as both a transcriptional corepressor and coactivator. Acts as a component of the histone deacetylase NuRD complex which participates in the remodeling of chromatin. In the NuRD complex, regulates transcription of its targets by modifying the acetylation status of the target chromatin and cofactor accessibility to the target DNA. In conjunction with other components of NuRD, acts as a transcriptional corepressor of BRCA1, ESR1, TFF1 and CDKN1A. Acts as a transcriptional coactivator of BCAS3, PAX5 and SUMO2, independent of the NuRD complex. Stimulates the expression of WNT1 by inhibiting the expression of its transcriptional corepressor SIX3. Regulates p53-dependent and -independent DNA repair processes following genotoxic stress. Regulates the stability and function of p53/TP53 by inhibiting its ubiquitination by COP1 and MDM2 thereby regulating the p53-dependent DNA repair. Plays a role in the regulation of the circadian clock and is essential for the generation and maintenance of circadian rhythms under constant light and for normal entrainment of behavior to light-dark (LD) cycles. Positively regulates the CLOCK-BMAL1 heterodimer mediated transcriptional activation of its own transcription and the transcription of CRY1. Regulates deacetylation of BMAL1 by regulating SIRT1 expression, resulting in derepressing CRY1-mediated transcription repression. With Tfcp2l1, promotes establishment and maintenance of pluripotency in embryonic stem cells (ESCs) and inhibits endoderm differentiation. The protein is Metastasis-associated protein MTA1 (Mta1) of Mus musculus (Mouse).